Reading from the N-terminus, the 384-residue chain is Toluene efflux pump periplasmic linker protein TtgA (384 aa).

The N-terminal stretch at 1–22 is a signal peptide; that stretch reads MQFKPAVTALVSAVALATLLSG. The N-palmitoyl cysteine moiety is linked to residue cysteine 23. A lipid anchor (S-diacylglycerol cysteine) is attached at cysteine 23. Residues 115 to 155 adopt a coiled-coil conformation; sequence LAERYKQLIDEQAVSKQEYDDANAKRLQAEASLKSAQIDLR. A disordered region spans residues 362-384; the sequence is ATNVKKPAGPDQANAAKADAKAE. Positions 368 to 378 are enriched in low complexity; sequence PAGPDQANAAK.

This sequence belongs to the membrane fusion protein (MFP) (TC 8.A.1) family.

The protein resides in the cell inner membrane. The periplasmic linker protein component of a constitutive organic solvent efflux system. Involved in export of toluene, styrene, m-xylene, propylbenzene and ethylbenzene. Also exports AMP and the antibiotics carbenicillin, nalidixic acid, chloramphenicol and tetracycline. The sequence is that of Toluene efflux pump periplasmic linker protein TtgA (ttgA) from Pseudomonas putida (strain DOT-T1E).